We begin with the raw amino-acid sequence, 88 residues long: MIFFNPVSFRLVRNILLNFDSTVMSKSSCGNTSINIVSNLIILLSTSSYDPNSGIDVSHALTTQITKKSHAPGYTLYKKLSFFSSVFF.

This is an uncharacterized protein from Homo sapiens (Human).